Here is a 436-residue protein sequence, read N- to C-terminus: GTPase Der (436 aa).

2 consecutive EngA-type G domains span residues 4–167 and 176–351; these read PTIA…PEQQ and IKFS…ENHR. GTP-binding positions include 10–17, 57–61, 119–122, 182–189, 229–233, and 294–297; these read GRANVGKS, DTGGI, NKID, GRPNVGKS, DTAGM, and NKWD. The KH-like domain maps to 352-436; the sequence is KRVQSSTLNE…PLHLIARKRN (85 aa).

This sequence belongs to the TRAFAC class TrmE-Era-EngA-EngB-Septin-like GTPase superfamily. EngA (Der) GTPase family. Associates with the 50S ribosomal subunit.

GTPase that plays an essential role in the late steps of ribosome biogenesis. The sequence is that of GTPase Der from Macrococcus caseolyticus (strain JCSC5402) (Macrococcoides caseolyticum).